We begin with the raw amino-acid sequence, 219 residues long: Uracil-DNA glycosylase (219 aa).

The active-site Proton acceptor is Asp-63.

It belongs to the uracil-DNA glycosylase (UDG) superfamily. UNG family.

Its subcellular location is the cytoplasm. The catalysed reaction is Hydrolyzes single-stranded DNA or mismatched double-stranded DNA and polynucleotides, releasing free uracil.. Its function is as follows. Excises uracil residues from the DNA which can arise as a result of misincorporation of dUMP residues by DNA polymerase or due to deamination of cytosine. This Mesomycoplasma hyopneumoniae (strain 7448) (Mycoplasma hyopneumoniae) protein is Uracil-DNA glycosylase.